Reading from the N-terminus, the 443-residue chain is Glutamyl-tRNA reductase (443 aa).

Substrate is bound by residues 49–52, Ser109, 114–116, and Gln120; these read TCNR and ETQ. Cys50 acts as the Nucleophile in catalysis. Position 189–194 (189–194) interacts with NADP(+); sequence GAGKMG.

Belongs to the glutamyl-tRNA reductase family. As to quaternary structure, homodimer.

The catalysed reaction is (S)-4-amino-5-oxopentanoate + tRNA(Glu) + NADP(+) = L-glutamyl-tRNA(Glu) + NADPH + H(+). Its pathway is porphyrin-containing compound metabolism; protoporphyrin-IX biosynthesis; 5-aminolevulinate from L-glutamyl-tRNA(Glu): step 1/2. Functionally, catalyzes the NADPH-dependent reduction of glutamyl-tRNA(Glu) to glutamate 1-semialdehyde (GSA). This Bacillus mycoides (strain KBAB4) (Bacillus weihenstephanensis) protein is Glutamyl-tRNA reductase.